Here is a 497-residue protein sequence, read N- to C-terminus: Cytochrome P450 76AD1 (497 aa).

A helical membrane pass occupies residues 4-24 (ATLAMILAIWFISFHFIKLLF). Cys439 is a binding site for heme.

The protein belongs to the cytochrome P450 family. Requires heme as cofactor.

It localises to the membrane. It participates in pigment biosynthesis; betalain biosynthesis. Functionally, converts L-DOPA to cyclo-DOPA in the betalain pathway. Provides the cyclo-DOPA moiety of all red betacyanins. The polypeptide is Cytochrome P450 76AD1 (Beta vulgaris (Sugar beet)).